Reading from the N-terminus, the 481-residue chain is Probable glycine dehydrogenase (decarboxylating) subunit 2 (481 aa).

Lys-265 is modified (N6-(pyridoxal phosphate)lysine).

Belongs to the GcvP family. C-terminal subunit subfamily. The glycine cleavage system is composed of four proteins: P, T, L and H. In this organism, the P 'protein' is a heterodimer of two subunits. The cofactor is pyridoxal 5'-phosphate.

It carries out the reaction N(6)-[(R)-lipoyl]-L-lysyl-[glycine-cleavage complex H protein] + glycine + H(+) = N(6)-[(R)-S(8)-aminomethyldihydrolipoyl]-L-lysyl-[glycine-cleavage complex H protein] + CO2. Functionally, the glycine cleavage system catalyzes the degradation of glycine. The P protein binds the alpha-amino group of glycine through its pyridoxal phosphate cofactor; CO(2) is released and the remaining methylamine moiety is then transferred to the lipoamide cofactor of the H protein. This chain is Probable glycine dehydrogenase (decarboxylating) subunit 2, found in Thermosipho melanesiensis (strain DSM 12029 / CIP 104789 / BI429).